A 395-amino-acid chain; its full sequence is Elongation factor Tu (395 aa).

The tr-type G domain maps to 10 to 204 (KPHVNVGTIG…AVDAYIDTPL (195 aa)). The G1 stretch occupies residues 19-26 (GHVDHGKT). 19 to 26 (GHVDHGKT) contributes to the GTP binding site. Thr-26 serves as a coordination point for Mg(2+). The G2 stretch occupies residues 60-64 (GITIN). The segment at 81 to 84 (DCPG) is G3. Residues 81–85 (DCPGH) and 136–139 (NKAD) each bind GTP. The interval 136 to 139 (NKAD) is G4. Residues 174 to 176 (SAL) form a G5 region.

Belongs to the TRAFAC class translation factor GTPase superfamily. Classic translation factor GTPase family. EF-Tu/EF-1A subfamily. In terms of assembly, monomer.

The protein localises to the cytoplasm. The enzyme catalyses GTP + H2O = GDP + phosphate + H(+). Its function is as follows. GTP hydrolase that promotes the GTP-dependent binding of aminoacyl-tRNA to the A-site of ribosomes during protein biosynthesis. The chain is Elongation factor Tu from Acholeplasma laidlawii (strain PG-8A).